Consider the following 546-residue polypeptide: Chaperonin GroEL 2 (546 aa).

ATP contacts are provided by residues 30-33 (TLGP), Lys-51, 87-91 (DGTTT), Gly-415, and Asp-496.

Belongs to the chaperonin (HSP60) family. As to quaternary structure, forms a cylinder of 14 subunits composed of two heptameric rings stacked back-to-back. Interacts with the co-chaperonin GroES.

Its subcellular location is the cytoplasm. It carries out the reaction ATP + H2O + a folded polypeptide = ADP + phosphate + an unfolded polypeptide.. Together with its co-chaperonin GroES, plays an essential role in assisting protein folding. The GroEL-GroES system forms a nano-cage that allows encapsulation of the non-native substrate proteins and provides a physical environment optimized to promote and accelerate protein folding. In Bradyrhizobium sp. (strain ORS 278), this protein is Chaperonin GroEL 2.